The following is a 113-amino-acid chain: Cell cycle protein GpsB (113 aa).

Positions 36-68 (LDMVIKDYSTFTQEIEALQAENIRLVQELDNAP) form a coiled coil.

It belongs to the GpsB family. In terms of assembly, forms polymers through the coiled coil domains. Interacts with PBP1, MreC and EzrA.

It is found in the cytoplasm. Functionally, divisome component that associates with the complex late in its assembly, after the Z-ring is formed, and is dependent on DivIC and PBP2B for its recruitment to the divisome. Together with EzrA, is a key component of the system that regulates PBP1 localization during cell cycle progression. Its main role could be the removal of PBP1 from the cell pole after pole maturation is completed. Also contributes to the recruitment of PBP1 to the division complex. Not essential for septum formation. This chain is Cell cycle protein GpsB, found in Listeria welshimeri serovar 6b (strain ATCC 35897 / DSM 20650 / CCUG 15529 / CIP 8149 / NCTC 11857 / SLCC 5334 / V8).